The primary structure comprises 277 residues: Carbonyl reductase [NADPH] 1 (277 aa).

S2 is modified (N-acetylserine). Phosphoserine is present on residues S2 and S30. NADP(+)-binding positions include 10–34 (VTGA…GDVV), 63–64 (DI), and N90. Residues 95 to 97 (FKT) and Q106 contribute to the glutathione site. S140 contributes to the substrate binding site. Position 193 to 194 (193 to 194 (AY)) interacts with glutathione. The active-site Proton acceptor is Y194. Residues 194–198 (YGVTK) and 231–233 (VRT) contribute to the NADP(+) site. N6-1-carboxyethyl lysine is present on K239.

The protein belongs to the short-chain dehydrogenases/reductases (SDR) family. In terms of assembly, monomer.

The protein resides in the cytoplasm. The catalysed reaction is a secondary alcohol + NADP(+) = a ketone + NADPH + H(+). It carries out the reaction prostaglandin F2alpha + NADP(+) = prostaglandin E2 + NADPH + H(+). The enzyme catalyses prostaglandin E1 + NADP(+) = 15-oxoprostaglandin E1 + NADPH + H(+). It catalyses the reaction menadione + NADPH + H(+) = menadiol + NADP(+). The catalysed reaction is prostaglandin D2 + NADP(+) = 15-oxoprostaglandin D2 + NADPH + H(+). It carries out the reaction prostaglandin E2 + NADP(+) = 15-oxoprostaglandin E2 + NADPH + H(+). The enzyme catalyses prostaglandin F2alpha + NADP(+) = 15-oxoprostaglandin F2alpha + NADPH + H(+). It catalyses the reaction daunorubicin + NADPH + H(+) = 13-dihydrodaunorubicin + NADP(+). The catalysed reaction is S-nitrosoglutathione + NADPH + H(+) = S-(hydroxysulfenamide)glutathione + NADP(+). It carries out the reaction a primary alcohol + NADP(+) = an aldehyde + NADPH + H(+). The enzyme catalyses cortisol + NADPH + H(+) = 20beta-dihydrocortisol + NADP(+). It catalyses the reaction corticosterone + NADPH + H(+) = 20beta-dihydrocorticosterone + NADP(+). NADPH-dependent reductase with broad substrate specificity. Catalyzes the reduction of a wide variety of carbonyl compounds including quinones, prostaglandins, menadione, plus various xenobiotics. Catalyzes the reduction of the antitumor anthracyclines doxorubicin and daunorubicin to the cardiotoxic compounds doxorubicinol and daunorubicinol. Can convert prostaglandin E to prostaglandin F2-alpha. Can bind glutathione, which explains its higher affinity for glutathione-conjugated substrates. Catalyzes the reduction of S-nitrosoglutathione. In addition, participates in the glucocorticoid metabolism by catalyzing the NADPH-dependent cortisol/corticosterone into 20beta-dihydrocortisol (20b-DHF) or 20beta-corticosterone (20b-DHB), which are weak agonists of NR3C1 and NR3C2 in adipose tissue. The protein is Carbonyl reductase [NADPH] 1 of Bos taurus (Bovine).